The chain runs to 194 residues: Peptidyl-tRNA hydrolase (194 aa).

Tyr-17 provides a ligand contact to tRNA. Residue His-22 is the Proton acceptor of the active site. Residues Phe-68, Asn-70, and Asn-116 each coordinate tRNA.

This sequence belongs to the PTH family. As to quaternary structure, monomer.

It localises to the cytoplasm. The catalysed reaction is an N-acyl-L-alpha-aminoacyl-tRNA + H2O = an N-acyl-L-amino acid + a tRNA + H(+). Its function is as follows. Hydrolyzes ribosome-free peptidyl-tRNAs (with 1 or more amino acids incorporated), which drop off the ribosome during protein synthesis, or as a result of ribosome stalling. In terms of biological role, catalyzes the release of premature peptidyl moieties from peptidyl-tRNA molecules trapped in stalled 50S ribosomal subunits, and thus maintains levels of free tRNAs and 50S ribosomes. The polypeptide is Peptidyl-tRNA hydrolase (Histophilus somni (strain 2336) (Haemophilus somnus)).